Reading from the N-terminus, the 838-residue chain is Adenylate cyclase (838 aa).

A catalytic region spans residues 1–541 (MNYDLFSAQK…DLRLSFPVTV (541 aa)). Residues 547–838 (EDLTHACEIR…VPFHSRLAMS (292 aa)) form a regulatory region.

It belongs to the adenylyl cyclase class-1 family.

It is found in the cytoplasm. It catalyses the reaction ATP = 3',5'-cyclic AMP + diphosphate. In Pasteurella multocida (strain Pm70), this protein is Adenylate cyclase (cya).